We begin with the raw amino-acid sequence, 233 residues long: uncharacterized protein (233 aa).

Belongs to the asfivirus H233R family.

This is an uncharacterized protein from African swine fever virus (strain Badajoz 1971 Vero-adapted) (Ba71V).